The sequence spans 161 residues: Globin CTT-VIIB-6 (161 aa).

An N-terminal signal peptide occupies residues 1 to 16 (MKFFAVLALCIVGAIA). The Globin domain occupies 18–161 (PLTADEASLV…NTFAIVVPRL (144 aa)). Heme b-binding residues include histidine 76 and histidine 111.

The protein belongs to the globin family. As to quaternary structure, homodimer.

The chain is Globin CTT-VIIB-6 (CTT-7B6) from Chironomus thummi thummi (Midge).